A 105-amino-acid chain; its full sequence is NADH-quinone oxidoreductase subunit K (105 aa).

3 helical membrane-spanning segments follow: residues 8–28, 33–53, and 65–85; these read VTNGLIFSTLLFVISVAGIII, ILILLMSIELMLLAVNTNFLI, and VFVFFIMAVAAAETAIGLAIV.

It belongs to the complex I subunit 4L family. NDH-1 is composed of 14 different subunits. Subunits NuoA, H, J, K, L, M, N constitute the membrane sector of the complex.

It is found in the cell inner membrane. The enzyme catalyses a quinone + NADH + 5 H(+)(in) = a quinol + NAD(+) + 4 H(+)(out). NDH-1 shuttles electrons from NADH, via FMN and iron-sulfur (Fe-S) centers, to quinones in the respiratory chain. The immediate electron acceptor for the enzyme in this species is believed to be ubiquinone. Couples the redox reaction to proton translocation (for every two electrons transferred, four hydrogen ions are translocated across the cytoplasmic membrane), and thus conserves the redox energy in a proton gradient. The polypeptide is NADH-quinone oxidoreductase subunit K (Francisella philomiragia subsp. philomiragia (strain ATCC 25017 / CCUG 19701 / FSC 153 / O#319-036)).